Consider the following 444-residue polypeptide: Elongation factor 1-alpha (444 aa).

Residues 15–238 (KPHINLAVVG…DSFQPPQRPV (224 aa)) form the tr-type G domain. The tract at residues 24–31 (GHVDNGKS) is G1. A GTP-binding site is contributed by 24–31 (GHVDNGKS). Residue Ser-31 coordinates Mg(2+). The G2 stretch occupies residues 80-84 (GVTIE). A G3 region spans residues 101–104 (DLPG). GTP is bound by residues 101–105 (DLPGH) and 163–166 (NKMD). The segment at 163–166 (NKMD) is G4. A G5 region spans residues 202-204 (SAI).

The protein belongs to the TRAFAC class translation factor GTPase superfamily. Classic translation factor GTPase family. EF-Tu/EF-1A subfamily.

The protein localises to the cytoplasm. The enzyme catalyses GTP + H2O = GDP + phosphate + H(+). In terms of biological role, GTP hydrolase that promotes the GTP-dependent binding of aminoacyl-tRNA to the A-site of ribosomes during protein biosynthesis. The sequence is that of Elongation factor 1-alpha from Pyrobaculum aerophilum (strain ATCC 51768 / DSM 7523 / JCM 9630 / CIP 104966 / NBRC 100827 / IM2).